Consider the following 265-residue polypeptide: Aquaporin-5 (265 aa).

The Cytoplasmic segment spans residues 1-12 (MKKEVCSVAFFK). Residues 13 to 33 (AVFAEFLATLIFVFFGLGSAL) traverse the membrane as a helical segment. At 34 to 39 (KWPSAL) the chain is on the extracellular side. Residues 40-60 (PTILQISIAFGLAIGTLAQAL) form a helical membrane-spanning segment. Topologically, residues 61–65 (GPVSG) are cytoplasmic. The discontinuously helical intramembrane region spans 66 to 74 (GHINPAITL). The NPA 1 motif lies at 69-71 (NPA). The Cytoplasmic portion of the chain corresponds to 75–87 (ALLIGNQISLLRA). Residues 88-108 (IFYVAAQLVGAIAGAGILYWL) form a helical membrane-spanning segment. Residues 109 to 126 (APGNARGNLAVNALSNNT) lie on the Extracellular side of the membrane. A glycan (N-linked (GlcNAc...) asparagine) is linked at N124. Residues 127-147 (TPGKAVVVELILTFQLALCIF) form a helical membrane-spanning segment. The Cytoplasmic segment spans residues 148-158 (SSTDSRRTSPV). Residues 159–179 (GSPALSIGLSVTLGHLVGIYF) traverse the membrane as a helical segment. A topological domain (extracellular) is located at residue T180. Residues 181-191 (GCSMNPARSFG) constitute an intramembrane region (discontinuously helical). The short motif at 185-187 (NPA) is the NPA 2 element. Topologically, residues 192–203 (PAVVMNRFSPSH) are extracellular. A helical transmembrane segment spans residues 204–224 (WVFWVGPIVGAVLAAILYFYL). Residues 225–265 (LFPSSLSLHDRVAVVKGTYEPEEDWEDHREERKKTIELTAH) are Cytoplasmic-facing.

The protein belongs to the MIP/aquaporin (TC 1.A.8) family. In terms of assembly, homotetramer; each monomer provides an independent water pore. Interacts with TRPV4; the interaction is probably indirect and regulates TRPV4 activation by hypotonicity. As to expression, detected at the luminal membrane of secretory epithelial cells in hindpaw sweat glands. Detected in acinar cells in salivary glands, in duct cells in lacrimal glands and in lung (at protein level). Detected in lung, parotid, submandibular, sublingual, and lacrimal gland tissues.

Its subcellular location is the apical cell membrane. It is found in the cell membrane. It localises to the cytoplasmic vesicle membrane. The catalysed reaction is H2O(in) = H2O(out). Its function is as follows. Aquaporins form homotetrameric transmembrane channels, with each monomer independently mediating water transport across the plasma membrane along its osmotic gradient. Plays an important role in fluid secretion in salivary glands. Required for TRPV4 activation by hypotonicity. Together with TRPV4, controls regulatory volume decrease in salivary epithelial cells. Seems to play a redundant role in water transport in the eye, lung and in sweat glands. This Mus musculus (Mouse) protein is Aquaporin-5.